A 329-amino-acid polypeptide reads, in one-letter code: MTTQQIDLQGPGPWGFRLVGGKDFEQPLAISRVTPGSKAALANLCIGDVITAIDGENTSNMTHLEAQNRIKGCTDNLTLTVARSEHKVWSPLVTEEGKRHPYKMNLASEPQEVLHIGSAHNRSAMPFTASPASSTTARVITNQYNNPAGLYSSENISNFNNALESKTAASGVEANSRPLDHAQPPSSLVIDKESEVYKMLQEKQELNEPPKQSTSFLVLQEILESEEKGDPNKPSGFRSVKAPVTKVAASIGNAQKLPMCDKCGTGIVGVFVKLRDRHRHPECYVCTDCGTNLKQKGHFFVEDQIYCEKHARERVTPPEGYEVVTVFPK.

Position 2 is an N-acetylthreonine (Thr-2). The PDZ domain maps to 3–85 (TQQIDLQGPG…NLTLTVARSE (83 aa)). Ser-90 and Ser-130 each carry phosphoserine. Residue Tyr-144 is modified to Phosphotyrosine. In terms of domain architecture, LIM zinc-binding spans 258 to 317 (PMCDKCGTGIVGVFVKLRDRHRHPECYVCTDCGTNLKQKGHFFVEDQIYCEKHARERVTP). The Zn(2+) site is built by Cys-260, Cys-263, His-280, Cys-283, Cys-286, Cys-289, Cys-307, and His-310. Thr-316 is modified (phosphothreonine). A Phosphotyrosine modification is found at Tyr-321.

In terms of assembly, interacts with ACTN1, ACTN2 and ACTN4. Interacts with PDLIM4. In terms of tissue distribution, strongly expressed in the heart and skeletal muscle, moderately expressed in the spleen, small intestine, colon, placenta, and lung. A lower level expression is seen in liver, thymus, kidney, prostate and pancreas and is not found in the brain, testis, ovary, and peripheral blood leukocytes.

It localises to the cytoplasm. Its subcellular location is the cytoskeleton. The protein localises to the myofibril. The protein resides in the sarcomere. It is found in the z line. Cytoskeletal protein that may act as an adapter that brings other proteins (like kinases) to the cytoskeleton. Involved in assembly, disassembly and directioning of stress fibers in fibroblasts. Required for the localization of ACTN1 and PALLD to stress fibers. Required for cell migration and in maintaining cell polarity of fibroblasts. The polypeptide is PDZ and LIM domain protein 1 (PDLIM1) (Homo sapiens (Human)).